Consider the following 202-residue polypeptide: ATP-dependent Clp protease proteolytic subunit (202 aa).

The Nucleophile role is filled by Ser-101. His-126 is a catalytic residue.

Belongs to the peptidase S14 family. As to quaternary structure, component of the chloroplastic Clp protease core complex.

It is found in the plastid. The protein localises to the chloroplast stroma. The catalysed reaction is Hydrolysis of proteins to small peptides in the presence of ATP and magnesium. alpha-casein is the usual test substrate. In the absence of ATP, only oligopeptides shorter than five residues are hydrolyzed (such as succinyl-Leu-Tyr-|-NHMec, and Leu-Tyr-Leu-|-Tyr-Trp, in which cleavage of the -Tyr-|-Leu- and -Tyr-|-Trp bonds also occurs).. Cleaves peptides in various proteins in a process that requires ATP hydrolysis. Has a chymotrypsin-like activity. Plays a major role in the degradation of misfolded proteins. This is ATP-dependent Clp protease proteolytic subunit from Platanus occidentalis (Sycamore).